Here is a 314-residue protein sequence, read N- to C-terminus: Probable 5-dehydro-4-deoxyglucarate dehydratase (314 aa).

This sequence belongs to the DapA family.

The enzyme catalyses 5-dehydro-4-deoxy-D-glucarate + H(+) = 2,5-dioxopentanoate + CO2 + H2O. It functions in the pathway carbohydrate acid metabolism; D-glucarate degradation; 2,5-dioxopentanoate from D-glucarate: step 2/2. The polypeptide is Probable 5-dehydro-4-deoxyglucarate dehydratase (Bradyrhizobium sp. (strain ORS 278)).